We begin with the raw amino-acid sequence, 108 residues long: MIITTTDVIQGSEVEEYLGIVTAEVVYGSNALRDFFAGIRDIIGGRTGSYEELFKQGQEEAIAELEKRARRMGANAVVGIEIDTGTINVDEKGALLLITAIGTAVKLA.

This sequence belongs to the UPF0145 family.

This Trichodesmium erythraeum (strain IMS101) protein is UPF0145 protein Tery_3795.